A 301-amino-acid chain; its full sequence is CRISPR-associated endonuclease Cas1 (301 aa).

Residues Glu133, His200, and Asp213 each contribute to the Mn(2+) site.

It belongs to the CRISPR-associated endonuclease Cas1 family. As to quaternary structure, homodimer, forms a heterotetramer with a Cas2 homodimer. Mg(2+) serves as cofactor. The cofactor is Mn(2+).

Functionally, CRISPR (clustered regularly interspaced short palindromic repeat), is an adaptive immune system that provides protection against mobile genetic elements (viruses, transposable elements and conjugative plasmids). CRISPR clusters contain spacers, sequences complementary to antecedent mobile elements, and target invading nucleic acids. CRISPR clusters are transcribed and processed into CRISPR RNA (crRNA). Acts as a dsDNA endonuclease. Involved in the integration of spacer DNA into the CRISPR cassette. In Clostridium sp. (strain SY8519), this protein is CRISPR-associated endonuclease Cas1.